A 296-amino-acid polypeptide reads, in one-letter code: Probable 2-(5''-triphosphoribosyl)-3'-dephosphocoenzyme-A synthase (296 aa).

It belongs to the CitG/MdcB family.

The enzyme catalyses 3'-dephospho-CoA + ATP = 2'-(5''-triphospho-alpha-D-ribosyl)-3'-dephospho-CoA + adenine. The sequence is that of Probable 2-(5''-triphosphoribosyl)-3'-dephosphocoenzyme-A synthase from Streptococcus mutans serotype c (strain ATCC 700610 / UA159).